Here is a 95-residue protein sequence, read N- to C-terminus: Co-chaperonin GroES (95 aa).

The tract at residues 20–45 is disordered; sequence KTKGGLIIPDSAKEKPAEGEITSVGE.

It belongs to the GroES chaperonin family. As to quaternary structure, heptamer of 7 subunits arranged in a ring. Interacts with the chaperonin GroEL.

The protein localises to the cytoplasm. Its function is as follows. Together with the chaperonin GroEL, plays an essential role in assisting protein folding. The GroEL-GroES system forms a nano-cage that allows encapsulation of the non-native substrate proteins and provides a physical environment optimized to promote and accelerate protein folding. GroES binds to the apical surface of the GroEL ring, thereby capping the opening of the GroEL channel. The protein is Co-chaperonin GroES of Paracoccus denitrificans.